The sequence spans 258 residues: tRNA pseudouridine synthase A (258 aa).

Asp-55 serves as the catalytic Nucleophile. Tyr-113 lines the substrate pocket.

It belongs to the tRNA pseudouridine synthase TruA family. As to quaternary structure, homodimer.

It catalyses the reaction uridine(38/39/40) in tRNA = pseudouridine(38/39/40) in tRNA. In terms of biological role, formation of pseudouridine at positions 38, 39 and 40 in the anticodon stem and loop of transfer RNAs. The chain is tRNA pseudouridine synthase A from Limosilactobacillus fermentum (strain NBRC 3956 / LMG 18251) (Lactobacillus fermentum).